Here is a 309-residue protein sequence, read N- to C-terminus: Porphobilinogen deaminase (309 aa).

Cys242 is subject to S-(dipyrrolylmethanemethyl)cysteine.

This sequence belongs to the HMBS family. In terms of assembly, monomer. Requires dipyrromethane as cofactor.

It catalyses the reaction 4 porphobilinogen + H2O = hydroxymethylbilane + 4 NH4(+). Its pathway is porphyrin-containing compound metabolism; protoporphyrin-IX biosynthesis; coproporphyrinogen-III from 5-aminolevulinate: step 2/4. Functionally, tetrapolymerization of the monopyrrole PBG into the hydroxymethylbilane pre-uroporphyrinogen in several discrete steps. This chain is Porphobilinogen deaminase, found in Legionella pneumophila (strain Lens).